The sequence spans 213 residues: Thiopurine S-methyltransferase (213 aa).

Residues Trp10, Leu46, Glu67, and Arg124 each contribute to the S-adenosyl-L-methionine site.

Belongs to the class I-like SAM-binding methyltransferase superfamily. TPMT family.

The protein localises to the cytoplasm. The enzyme catalyses S-adenosyl-L-methionine + a thiopurine = S-adenosyl-L-homocysteine + a thiopurine S-methylether.. This Xanthobacter autotrophicus (strain ATCC BAA-1158 / Py2) protein is Thiopurine S-methyltransferase.